We begin with the raw amino-acid sequence, 215 residues long: Pyridoxine/pyridoxamine 5'-phosphate oxidase (215 aa).

Residues 8–11 and K66 each bind substrate; that span reads RQEY. Residues 61-66, 76-77, R82, K83, and Q105 contribute to the FMN site; these read RIVLLK and YT. Substrate-binding residues include Y123 and R127. FMN contacts are provided by residues 140-141 and W186; that span reads QS. Substrate is bound at residue 192 to 194; that stretch reads RLH. R196 contacts FMN.

This sequence belongs to the pyridoxamine 5'-phosphate oxidase family. Homodimer. FMN is required as a cofactor.

The catalysed reaction is pyridoxamine 5'-phosphate + O2 + H2O = pyridoxal 5'-phosphate + H2O2 + NH4(+). It carries out the reaction pyridoxine 5'-phosphate + O2 = pyridoxal 5'-phosphate + H2O2. The protein operates within cofactor metabolism; pyridoxal 5'-phosphate salvage; pyridoxal 5'-phosphate from pyridoxamine 5'-phosphate: step 1/1. Its pathway is cofactor metabolism; pyridoxal 5'-phosphate salvage; pyridoxal 5'-phosphate from pyridoxine 5'-phosphate: step 1/1. Its function is as follows. Catalyzes the oxidation of either pyridoxine 5'-phosphate (PNP) or pyridoxamine 5'-phosphate (PMP) into pyridoxal 5'-phosphate (PLP). This chain is Pyridoxine/pyridoxamine 5'-phosphate oxidase, found in Salinibacter ruber (strain DSM 13855 / M31).